The following is a 362-amino-acid chain: Atypical chemokine receptor 3 (362 aa).

The Extracellular segment spans residues 1–47 (MDVHLFDYVEPGNYSDINWPCNSSDCIVVDTVQCPAMPNKNVLLYTL). N-linked (GlcNAc...) asparagine glycans are attached at residues Asn-13 and Asn-22. The chain crosses the membrane as a helical span at residues 48–68 (SFIYIFIFVIGMIANSVVVWV). Topologically, residues 69–81 (NIQAKTTGYDTHC) are cytoplasmic. Residues 82–102 (YILNLAIADLWVVITIPVWVV) form a helical membrane-spanning segment. Residues 103–118 (SLVQHNQWPMGELTCK) lie on the Extracellular side of the membrane. Cysteines 117 and 196 form a disulfide. The helical transmembrane segment at 119–139 (ITHLIFSINLFGSIFFLACMS) threads the bilayer. At 140–162 (VDRYLSITYFTSTSSYKKKMVRR) the chain is on the cytoplasmic side. Residues 163–183 (VVCVLVWLLAFFVSLPDTYYL) traverse the membrane as a helical segment. The Extracellular segment spans residues 184–213 (KTVTSASNNETYCRSFYPEHSIKEWLIGME). A helical membrane pass occupies residues 214-234 (LVSVILGFAVPFTIIAIFYFL). At 235 to 252 (LARAMSASGDQEKHSSRK) the chain is on the cytoplasmic side. The chain crosses the membrane as a helical span at residues 253–273 (IIFSYVVVFLVCWLPYHFVVL). Over 274-296 (LDIFSILHYIPFTCQLENVLFTA) the chain is Extracellular. The helical transmembrane segment at 297 to 319 (LHVTQCLSLVHCCVNPVLYSFIN) threads the bilayer. Over 320–362 (RNYRYELMKAFIFKYSAKTGLTKLIDASRVSETEYSALEQNTK) the chain is Cytoplasmic. Residues 324–362 (YELMKAFIFKYSAKTGLTKLIDASRVSETEYSALEQNTK) form a C-terminal cytoplasmic tail region. A phosphoserine mark is found at Ser-347, Ser-350, and Ser-355.

This sequence belongs to the G-protein coupled receptor 1 family. Atypical chemokine receptor subfamily. Homodimer. Can form heterodimers with CXCR4; heterodimerization may regulate CXCR4 signaling activity. Interacts with ARRB1 and ARRB2. The Ser/Thr residues in the C-terminal cytoplasmic tail may be phosphorylated. Post-translationally, ubiquitinated at the Lys residues in its C-terminal cytoplasmic tail and is essential for correct trafficking from and to the cell membrane. Deubiquitinated by CXCL12-stimulation in a reversible manner. Expressed in vascular smooth muscle cells (at protein level). In brain, expressed in blood vessels, pyramidal cells in hippocampal subfield CA3, mature dentate gyrus granule cells, ventricle walls, olfactory bulb, accumbens shell, supraoptic, lateroanterior and ventromedial hypothalamic nuclei, medial region of thalamus, and motor nuclei, central gray and raphe magnus nucleus of brain stem. Detected in primary neurons, GABAergic neurons, astrocytes, cerebral cortex, ventral striatum and choroid plexus. Not detected in mesencephalon.

It localises to the cell membrane. The protein resides in the early endosome. Its subcellular location is the recycling endosome. Atypical chemokine receptor that controls chemokine levels and localization via high-affinity chemokine binding that is uncoupled from classic ligand-driven signal transduction cascades, resulting instead in chemokine sequestration, degradation, or transcytosis. Also known as interceptor (internalizing receptor) or chemokine-scavenging receptor or chemokine decoy receptor. Acts as a receptor for chemokines CXCL11 and CXCL12/SDF1. Chemokine binding does not activate G-protein-mediated signal transduction but instead induces beta-arrestin recruitment, leading to ligand internalization and activation of MAPK signaling pathway. Required for regulation of CXCR4 protein levels in migrating interneurons, thereby adapting their chemokine responsiveness. In glioma cells, transduces signals via MEK/ERK pathway, mediating resistance to apoptosis. Promotes cell growth and survival. Not involved in cell migration, adhesion or proliferation of normal hematopoietic progenitors but activated by CXCL11 in malignant hemapoietic cells, leading to phosphorylation of ERK1/2 (MAPK3/MAPK1) and enhanced cell adhesion and migration. Plays a regulatory role in CXCR4-mediated activation of cell surface integrins by CXCL12. Required for heart valve development. In terms of biological role, atypical chemokine receptor that controls chemokine levels and localization via high-affinity chemokine binding that is uncoupled from classic ligand-driven signal transduction cascades, resulting instead in chemokine sequestration, degradation, or transcytosis. Also known as interceptor (internalizing receptor) or chemokine-scavenging receptor or chemokine decoy receptor. Acts as a receptor for chemokines CXCL11 and CXCL12/SDF1. Chemokine binding does not activate G-protein-mediated signal transduction but instead induces beta-arrestin recruitment, leading to ligand internalization and activation of MAPK signaling pathway. Required for regulation of CXCR4 protein levels in migrating interneurons, thereby adapting their chemokine responsiveness. In glioma cells, transduces signals via MEK/ERK pathway, mediating resistance to apoptosis. Promotes cell growth and survival. Not involved in cell migration, adhesion or proliferation of normal hematopoietic progenitors but activated by CXCL11 in malignant hemapoietic cells, leading to phosphorylation of ERK1/2 (MAPK3/MAPK1) and enhanced cell adhesion and migration. Plays a regulatory role in CXCR4-mediated activation of cell surface integrins by CXCL12. Required for heart valve development. Regulates axon guidance in the oculomotor system through the regulation of CXCL12 levels. The chain is Atypical chemokine receptor 3 from Rattus norvegicus (Rat).